We begin with the raw amino-acid sequence, 116 residues long: Putative iron-sulfur cluster insertion protein ErpA (116 aa).

Iron-sulfur cluster is bound by residues C44, C108, and C110.

Belongs to the HesB/IscA family. As to quaternary structure, homodimer. Requires iron-sulfur cluster as cofactor.

Functionally, required for insertion of 4Fe-4S clusters. The protein is Putative iron-sulfur cluster insertion protein ErpA of Herminiimonas arsenicoxydans.